The following is a 102-amino-acid chain: Co-chaperonin GroES (102 aa).

This sequence belongs to the GroES chaperonin family. As to quaternary structure, heptamer of 7 subunits arranged in a ring. Interacts with the chaperonin GroEL.

The protein localises to the cytoplasm. In terms of biological role, together with the chaperonin GroEL, plays an essential role in assisting protein folding. The GroEL-GroES system forms a nano-cage that allows encapsulation of the non-native substrate proteins and provides a physical environment optimized to promote and accelerate protein folding. GroES binds to the apical surface of the GroEL ring, thereby capping the opening of the GroEL channel. This chain is Co-chaperonin GroES, found in Chlamydia trachomatis serovar D (strain ATCC VR-885 / DSM 19411 / UW-3/Cx).